Reading from the N-terminus, the 594-residue chain is Glutamate decarboxylase 1 (594 aa).

Residues 1 to 13 (MASSTPSSSATSS) are compositionally biased toward low complexity. A disordered region spans residues 1–22 (MASSTPSSSATSSNAGADPNTA). Phosphoserine is present on Ser78. 190–192 (QLS) contacts 4-aminobutanoate. Lys405 bears the N6-(pyridoxal phosphate)lysine mark. Arg567 is a 4-aminobutanoate binding site.

Belongs to the group II decarboxylase family. Homodimer. Requires pyridoxal 5'-phosphate as cofactor.

It carries out the reaction L-glutamate + H(+) = 4-aminobutanoate + CO2. Its function is as follows. Catalyzes the synthesis of the inhibitory neurotransmitter gamma-aminobutyric acid (GABA) with pyridoxal 5'-phosphate as cofactor. The polypeptide is Glutamate decarboxylase 1 (GAD1) (Canis lupus familiaris (Dog)).